The sequence spans 155 residues: MSQVILDLQLACEDHSGLPEESQFQTWLNAVIPQFQEESEVTIRLVDEAESHDLNLTYRGKDKPTNVLSFPFEAPPGMEMPLLGDLIICRQVVEQEAKEQDKPLEAHWAHMVVHGSLHLLGYDHIEDDEAEEMEALETEIMLALGYEDPYISEKD.

The Zn(2+) site is built by H114, H118, and H124.

This sequence belongs to the endoribonuclease YbeY family. Zn(2+) is required as a cofactor.

It is found in the cytoplasm. Single strand-specific metallo-endoribonuclease involved in late-stage 70S ribosome quality control and in maturation of the 3' terminus of the 16S rRNA. The polypeptide is Endoribonuclease YbeY (Citrobacter koseri (strain ATCC BAA-895 / CDC 4225-83 / SGSC4696)).